Consider the following 959-residue polypeptide: Protein moonraker (959 aa).

Residues 124-156 (LPHSSHKGMHTKVERKDSKSQDVCHCSHQPSRV) are disordered. Basic and acidic residues predominate over residues 134–145 (TKVERKDSKSQD). S279 carries the post-translational modification Phosphoserine. Over residues 456–470 (EEAPRIEDNGTDFKD) the composition is skewed to basic and acidic residues. Disordered regions lie at residues 456-560 (EEAP…ASPK) and 572-610 (RDAAKEQSLQQEDIHKESQLRGDAEQEAARLSWPDAESS). Positions 515–533 (PNQPYSKSRLQQTTVSSRL) are enriched in polar residues. Positions 547–558 (WIPPNPTSPPAS) are enriched in pro residues. A coiled-coil region spans residues 582–674 (QEDIHKESQL…TQLADKVEEA (93 aa)). Over residues 583–599 (EDIHKESQLRGDAEQEA) the composition is skewed to basic and acidic residues. Phosphoserine is present on S691. 2 disordered regions span residues 692–721 (SVEANSHLKDRPSRHAAAAAQPAEQASDVP) and 848–883 (LDESVTTEEGSEKREAPLPLSREDLHQRKGQTPLSV). Low complexity predominate over residues 707 to 717 (AAAAAQPAEQA). The segment covering 857–874 (GSEKREAPLPLSREDLHQ) has biased composition (basic and acidic residues). The necessary and sufficient for CEP20-binding stretch occupies residues 877-959 (GQTPLSVPPR…FTSEFLEAAA (83 aa)).

As to quaternary structure, interacts with CEP63 and WDR62. Forms a complex with OFD1 and CEP20/FOR20. Interacts with PCM1.

Its subcellular location is the cytoplasm. The protein resides in the cytoskeleton. It localises to the microtubule organizing center. It is found in the centrosome. The protein localises to the centriolar satellite. Involved in centriole duplication. Positively regulates CEP63 centrosomal localization. Required for WDR62 centrosomal localization and promotes the centrosomal localization of CDK2. May play a role in cilium assembly. The sequence is that of Protein moonraker (Kiaa0753) from Mus musculus (Mouse).